Consider the following 172-residue polypeptide: Translationally-controlled tumor protein homolog (172 aa).

A TCTP domain is found at 1–172 (MIIFKDLLTG…FKHGLDEEKV (172 aa)).

This sequence belongs to the TCTP family. Expressed by the venom gland.

Its subcellular location is the secreted. Venom protein that causes edema, enhances vascular permeability and is likely related to the inflammatory activity of the venom. The protein is Translationally-controlled tumor protein homolog of Loxosceles intermedia (Brown spider).